The chain runs to 263 residues: Acetylglutamate kinase (263 aa).

Substrate is bound by residues 48–49 (GG), R70, and N162.

The protein belongs to the acetylglutamate kinase family. ArgB subfamily.

The protein resides in the cytoplasm. It carries out the reaction N-acetyl-L-glutamate + ATP = N-acetyl-L-glutamyl 5-phosphate + ADP. Its pathway is amino-acid biosynthesis; L-arginine biosynthesis; N(2)-acetyl-L-ornithine from L-glutamate: step 2/4. Functionally, catalyzes the ATP-dependent phosphorylation of N-acetyl-L-glutamate. The polypeptide is Acetylglutamate kinase (Vibrio campbellii (strain ATCC BAA-1116)).